We begin with the raw amino-acid sequence, 228 residues long: 7-cyano-7-deazaguanine synthase (228 aa).

Leu9–Leu19 is an ATP binding site. Zn(2+) contacts are provided by Cys193, Cys203, Cys206, and Cys209.

It belongs to the QueC family. It depends on Zn(2+) as a cofactor.

The catalysed reaction is 7-carboxy-7-deazaguanine + NH4(+) + ATP = 7-cyano-7-deazaguanine + ADP + phosphate + H2O + H(+). It participates in purine metabolism; 7-cyano-7-deazaguanine biosynthesis. In terms of biological role, catalyzes the ATP-dependent conversion of 7-carboxy-7-deazaguanine (CDG) to 7-cyano-7-deazaguanine (preQ(0)). The sequence is that of 7-cyano-7-deazaguanine synthase from Rickettsia conorii (strain ATCC VR-613 / Malish 7).